The primary structure comprises 333 residues: MMEQLLQSTPSWTNVAIFFAIGVGLLLVVLGFVTYGILAERKVMGFMQGRIGPNQVGGRWGLLQTVADVLKLLLKEDTIPKAADRPLFILAPVIAFAPAFMVLAALPFTDALQFADIGVGLLYYIAVSGLTTIGVVTGAWASNNKYALLGGMRAAAQMISYEVPLVMSVIGVILLSGSLNLNDIVAAQKDVWFIVVQPIGFLVFLIAAVAELNRTPFDLPEAESELVAGFHVEYSGFRWAFFMLAEYVYFFAMAALTTVLFLGGWHPLPFLGFIPGAVWFALKFSLVVFLFIWFRITFPRVRADQLMEFGWKVLLPVALVNIFVTALVKQLFF.

The next 8 membrane-spanning stretches (helical) occupy residues Ile17 to Ile37, Phe88 to Phe108, Ile117 to Thr137, Ile159 to Leu179, Val191 to Glu211, Phe241 to Phe261, Phe273 to Trp293, and Val313 to Phe333.

The protein belongs to the complex I subunit 1 family. NDH-1 is composed of 14 different subunits. Subunits NuoA, H, J, K, L, M, N constitute the membrane sector of the complex.

It localises to the cell membrane. It carries out the reaction a quinone + NADH + 5 H(+)(in) = a quinol + NAD(+) + 4 H(+)(out). NDH-1 shuttles electrons from NADH, via FMN and iron-sulfur (Fe-S) centers, to quinones in the respiratory chain. The immediate electron acceptor for the enzyme in this species is believed to be ubiquinone. Couples the redox reaction to proton translocation (for every two electrons transferred, four hydrogen ions are translocated across the cytoplasmic membrane), and thus conserves the redox energy in a proton gradient. This subunit may bind ubiquinone. The sequence is that of NADH-quinone oxidoreductase subunit H from Anoxybacillus flavithermus (strain DSM 21510 / WK1).